An 83-amino-acid polypeptide reads, in one-letter code: High-potential iron-sulfur protein (83 aa).

Residues Cys-43, Cys-46, Cys-61, and Cys-75 each coordinate [4Fe-4S] cluster.

The protein belongs to the high-potential iron-sulfur protein (HiPIP) family. Homodimer.

Its subcellular location is the periplasm. In terms of biological role, specific class of high-redox-potential 4Fe-4S ferredoxins. Functions in anaerobic electron transport in most purple and in some other photosynthetic bacteria and in at least one genus (Paracoccus) of halophilic, denitrifying bacteria. The sequence is that of High-potential iron-sulfur protein from Thiocystis violacea.